A 757-amino-acid chain; its full sequence is Maltose phosphorylase (757 aa).

Residue 354–355 (WD) participates in substrate binding. The active-site Proton donor is Glu483. Residue 588 to 589 (KQ) participates in substrate binding.

Belongs to the glycosyl hydrolase 65 family.

It catalyses the reaction D-maltose + phosphate = beta-D-glucose 1-phosphate + D-glucose. The protein operates within glycan degradation; maltose degradation. Functionally, catalyzes the phosphorolysis of maltose, leading to the formation of glucose and glucose 1-P. The polypeptide is Maltose phosphorylase (mdxK) (Bacillus subtilis (strain 168)).